The chain runs to 40 residues: Photosystem II reaction center protein J (40 aa).

The chain crosses the membrane as a helical span at residues 8-28; it reads IPLWIIGTVTGILVIGLIGIF.

The protein belongs to the PsbJ family. PSII is composed of 1 copy each of membrane proteins PsbA, PsbB, PsbC, PsbD, PsbE, PsbF, PsbH, PsbI, PsbJ, PsbK, PsbL, PsbM, PsbT, PsbX, PsbY, PsbZ, Psb30/Ycf12, at least 3 peripheral proteins of the oxygen-evolving complex and a large number of cofactors. It forms dimeric complexes.

It localises to the plastid. It is found in the chloroplast thylakoid membrane. In terms of biological role, one of the components of the core complex of photosystem II (PSII). PSII is a light-driven water:plastoquinone oxidoreductase that uses light energy to abstract electrons from H(2)O, generating O(2) and a proton gradient subsequently used for ATP formation. It consists of a core antenna complex that captures photons, and an electron transfer chain that converts photonic excitation into a charge separation. This is Photosystem II reaction center protein J from Eucalyptus globulus subsp. globulus (Tasmanian blue gum).